The following is a 574-amino-acid chain: Sulfate adenylyltransferase (574 aa).

The segment at 1–169 is N-terminal; it reads MANTPHGGVL…IEAVNKLNHY (169 aa). Residues 170–394 form a catalytic region; it reads DYVALRYTPA…LRESNPPRAS (225 aa). Glutamine 197 lines the sulfate pocket. Residues 197–200 and 291–294 contribute to the ATP site; these read QTRN and GRDH. Active-site residues include threonine 198, arginine 199, and asparagine 200. Arginine 199 contributes to the sulfate binding site. Alanine 295 is a sulfate binding site. Valine 333 is an ATP binding site. Positions 395-574 are allosteric regulation domain; adenylyl-sulfate kinase-like; it reads QGFTIFLTGY…LESEGYFERL (180 aa). 3'-phosphoadenylyl sulfate contacts are provided by residues 434–437, arginine 451, 477–478, and arginine 516; these read DTVR and IA.

The protein in the N-terminal section; belongs to the sulfate adenylyltransferase family. It in the C-terminal section; belongs to the APS kinase family. In terms of assembly, homohexamer. Dimer of trimers.

The protein localises to the cytoplasm. It carries out the reaction sulfate + ATP + H(+) = adenosine 5'-phosphosulfate + diphosphate. It functions in the pathway sulfur metabolism; hydrogen sulfide biosynthesis; sulfite from sulfate: step 1/3. With respect to regulation, allosterically inhibited by 3'-phosphoadenosine 5'-phosphosulfate (PAPS). Functionally, catalyzes the first intracellular reaction of sulfate assimilation, forming adenosine-5'-phosphosulfate (APS) from inorganic sulfate and ATP. Plays an important role in sulfate activation as a component of the biosynthesis pathway of sulfur-containing amino acids. The chain is Sulfate adenylyltransferase from Aspergillus niger.